The chain runs to 157 residues: Large ribosomal subunit protein eL24 (157 aa).

K2 is covalently cross-linked (Glycyl lysine isopeptide (Lys-Gly) (interchain with G-Cter in SUMO2)). Position 4 is an ADP-ribosyl glutamic acid (E4). K27 bears the N6-acetyllysine; alternate mark. Residue K27 forms a Glycyl lysine isopeptide (Lys-Gly) (interchain with G-Cter in SUMO2); alternate linkage. K35 is covalently cross-linked (Glycyl lysine isopeptide (Lys-Gly) (interchain with G-Cter in SUMO2)). K77 carries the N6-acetyllysine modification. Residue T83 is modified to Phosphothreonine. Position 86 is a phosphoserine (S86). The residue at position 93 (K93) is an N6-acetyllysine. Residues 106 to 117 are compositionally biased toward basic and acidic residues; sequence EQAIRAAKEAKK. Residues 106 to 157 are disordered; that stretch reads EQAIRAAKEAKKAKQASKKTAMAAAKAPTKAAPKQKIVKPVKVSAPRVGGKR. Positions 123-140 are enriched in low complexity; it reads KKTAMAAAKAPTKAAPKQ. N6-succinyllysine is present on K131. K147 participates in a covalent cross-link: Glycyl lysine isopeptide (Lys-Gly) (interchain with G-Cter in SUMO2). Phosphoserine is present on S149.

It belongs to the eukaryotic ribosomal protein eL24 family. In terms of assembly, component of the large ribosomal subunit. Mono-ADP-ribosylation at Glu-4 by PARP16 inhibits polysome assembly and mRNA loading, thereby inhibiting protein translation.

Its subcellular location is the cytoplasm. In terms of biological role, component of the large ribosomal subunit. The ribosome is a large ribonucleoprotein complex responsible for the synthesis of proteins in the cell. The protein is Large ribosomal subunit protein eL24 (RPL24) of Bos taurus (Bovine).